The chain runs to 86 residues: Large ribosomal subunit protein uL23 (86 aa).

The protein belongs to the universal ribosomal protein uL23 family. As to quaternary structure, part of the 50S ribosomal subunit. Contacts protein L29.

Its function is as follows. Binds to 23S rRNA. One of the proteins that surrounds the polypeptide exit tunnel on the outside of the ribosome. The protein is Large ribosomal subunit protein uL23 of Thermococcus sibiricus (strain DSM 12597 / MM 739).